A 223-amino-acid polypeptide reads, in one-letter code: Probable Ras-related protein Rab-4A (223 aa).

16 to 23 (GNAGTGKT) serves as a coordination point for GTP. An Effector region motif is present at residues 38–46 (TQHTIGAEF). Residues 64–68 (DTAGQ) and 122–125 (NKKD) contribute to the GTP site. 2 S-geranylgeranyl cysteine lipidation sites follow: Cys221 and Cys223. The residue at position 223 (Cys223) is a Cysteine methyl ester.

Belongs to the small GTPase superfamily. Rab family.

The protein resides in the cell membrane. Protein transport. Probably involved in vesicular traffic. The sequence is that of Probable Ras-related protein Rab-4A from Echinococcus multilocularis (Fox tapeworm).